The sequence spans 259 residues: Ubiquinone/menaquinone biosynthesis C-methyltransferase UbiE (259 aa).

Residues Thr82, Asp103, 131 to 132 (NA), and Ser148 contribute to the S-adenosyl-L-methionine site.

This sequence belongs to the class I-like SAM-binding methyltransferase superfamily. MenG/UbiE family.

It carries out the reaction a 2-demethylmenaquinol + S-adenosyl-L-methionine = a menaquinol + S-adenosyl-L-homocysteine + H(+). The enzyme catalyses a 2-methoxy-6-(all-trans-polyprenyl)benzene-1,4-diol + S-adenosyl-L-methionine = a 5-methoxy-2-methyl-3-(all-trans-polyprenyl)benzene-1,4-diol + S-adenosyl-L-homocysteine + H(+). The protein operates within quinol/quinone metabolism; menaquinone biosynthesis; menaquinol from 1,4-dihydroxy-2-naphthoate: step 2/2. It participates in cofactor biosynthesis; ubiquinone biosynthesis. Methyltransferase required for the conversion of demethylmenaquinol (DMKH2) to menaquinol (MKH2) and the conversion of 2-polyprenyl-6-methoxy-1,4-benzoquinol (DDMQH2) to 2-polyprenyl-3-methyl-6-methoxy-1,4-benzoquinol (DMQH2). In Vibrio parahaemolyticus serotype O3:K6 (strain RIMD 2210633), this protein is Ubiquinone/menaquinone biosynthesis C-methyltransferase UbiE.